Here is a 102-residue protein sequence, read N- to C-terminus: ATP-dependent Clp protease adapter protein ClpS (102 aa).

Belongs to the ClpS family. In terms of assembly, binds to the N-terminal domain of the chaperone ClpA.

Its function is as follows. Involved in the modulation of the specificity of the ClpAP-mediated ATP-dependent protein degradation. The polypeptide is ATP-dependent Clp protease adapter protein ClpS (Shewanella woodyi (strain ATCC 51908 / MS32)).